Consider the following 325-residue polypeptide: Fructose-1,6-bisphosphatase class 1 (325 aa).

Mg(2+) contacts are provided by E84, D103, L105, and D106. Substrate-binding positions include 106-109 (DGSS), N196, and K262. E268 is a Mg(2+) binding site.

The protein belongs to the FBPase class 1 family. As to quaternary structure, homotetramer. The cofactor is Mg(2+).

It localises to the cytoplasm. It carries out the reaction beta-D-fructose 1,6-bisphosphate + H2O = beta-D-fructose 6-phosphate + phosphate. The protein operates within carbohydrate biosynthesis; gluconeogenesis. The chain is Fructose-1,6-bisphosphatase class 1 from Shewanella baltica (strain OS195).